A 220-amino-acid chain; its full sequence is ATP-dependent Clp protease proteolytic subunit (220 aa).

The active-site Nucleophile is Ser122. His147 is an active-site residue.

It belongs to the peptidase S14 family. As to quaternary structure, fourteen ClpP subunits assemble into 2 heptameric rings which stack back to back to give a disk-like structure with a central cavity, resembling the structure of eukaryotic proteasomes.

It is found in the cytoplasm. It catalyses the reaction Hydrolysis of proteins to small peptides in the presence of ATP and magnesium. alpha-casein is the usual test substrate. In the absence of ATP, only oligopeptides shorter than five residues are hydrolyzed (such as succinyl-Leu-Tyr-|-NHMec, and Leu-Tyr-Leu-|-Tyr-Trp, in which cleavage of the -Tyr-|-Leu- and -Tyr-|-Trp bonds also occurs).. Cleaves peptides in various proteins in a process that requires ATP hydrolysis. Has a chymotrypsin-like activity. Plays a major role in the degradation of misfolded proteins. In Colwellia psychrerythraea (strain 34H / ATCC BAA-681) (Vibrio psychroerythus), this protein is ATP-dependent Clp protease proteolytic subunit.